A 103-amino-acid polypeptide reads, in one-letter code: Large ribosomal subunit protein bL21 (103 aa).

The protein belongs to the bacterial ribosomal protein bL21 family. Part of the 50S ribosomal subunit. Contacts protein L20.

Functionally, this protein binds to 23S rRNA in the presence of protein L20. In Dechloromonas aromatica (strain RCB), this protein is Large ribosomal subunit protein bL21.